Consider the following 783-residue polypeptide: Serine/threonine-protein kinase SIK1 (783 aa).

One can recognise a Protein kinase domain in the interval 27–278 (YDIERTLGKG…IAQIRQHRWM (252 aa)). Residues 33–41 (LGKGNFAVV) and lysine 56 contribute to the ATP site. Residue aspartate 149 is the Proton acceptor of the active site. Position 182 is a phosphothreonine; by LKB1 and GSK3-beta (threonine 182). Serine 186 bears the Phosphoserine; by autocatalysis mark. The 41-residue stretch at 303–343 (DYDEQALGIMQTLGVDRQRTVESLQNSSYNHFAAIYYLLLE) folds into the UBA domain. Threonine 322 carries the phosphothreonine; by CaMK1 modification. Disordered stretches follow at residues 353 to 377 (CARPGPARQPRPRSSDLSGLEVPQE) and 449 to 477 (RQGPGLEEEQDTQESLPSSTGRRHTLAEV). The residue at position 473 (threonine 473) is a Phosphothreonine; by PKA. Serine 575 carries the post-translational modification Phosphoserine; by PKA. The RK-rich region; required for cAMP responsiveness and nuclear localization stretch occupies residues 583-612 (LKAFRQQLRKTTRTKGFLGLNKIKGLARQV). The disordered stretch occupies residues 619–643 (RASRGGLSPFHAPAQSPGLHGGAAG).

The protein belongs to the protein kinase superfamily. CAMK Ser/Thr protein kinase family. AMPK subfamily. As to quaternary structure, interacts with ATP1A1. Interacts (when phosphorylated on Thr-182 and Ser-186) with YWHAZ. Interacts (when phosphorylated at Thr-473 and/or Ser-575) with 14-3-3 proteins; the interaction inhibits kinase activity towards TORCs. There is a cooperative effect of the phosphorylation sites in 14-3-3 binding as the interaction is stronger when both Thr-473 and Ser-575 are modified. The cofactor is Mg(2+). Post-translationally, phosphorylated at Thr-182 by STK11/LKB1 in complex with STE20-related adapter-alpha (STRADA) pseudo kinase and CAB39, leading to its activation. Phosphorylation at Thr-182 promotes autophosphorylation at Ser-186, which is required for sustained activity. Autophosphorylation at Ser-186 is maintained by sequential phosphorylation at Thr-182 by GSK3-beta. GSK3-beta cannot initiate phosphorylation at Thr-182, it can only maintain it. Phosphorylation at Ser-575 in response to cAMP signaling promotes translocation to the cytoplasm. Phosphorylation at Thr-322 by CaMK1 following intracellular sodium concentration leads to activation.

The protein resides in the cytoplasm. It is found in the nucleus. It carries out the reaction L-seryl-[protein] + ATP = O-phospho-L-seryl-[protein] + ADP + H(+). The enzyme catalyses L-threonyl-[protein] + ATP = O-phospho-L-threonyl-[protein] + ADP + H(+). Its activity is regulated as follows. Activated by phosphorylation on Thr-182. Also activated by phosphorylation on Thr-322 in response to increases in intracellular sodium in parallel with elevations in intracellular calcium through the reversible sodium/calcium exchanger. Inhibited by phosphorylation at Thr-473 and Ser-575, probably by PKA, which triggers interaction with 14-3-3 proteins. In terms of biological role, serine/threonine-protein kinase involved in various processes such as cell cycle regulation, gluconeogenesis and lipogenesis regulation, muscle growth and differentiation and tumor suppression. Phosphorylates HDAC4, HDAC5, PPME1, SREBF1, CRTC1/TORC1. Inhibits CREB activity by phosphorylating and inhibiting activity of TORCs, the CREB-specific coactivators, like CRTC2/TORC2 and CRTC3/TORC3 in response to cAMP signaling. Acts as a tumor suppressor and plays a key role in p53/TP53-dependent anoikis, a type of apoptosis triggered by cell detachment: required for phosphorylation of p53/TP53 in response to loss of adhesion and is able to suppress metastasis. Part of a sodium-sensing signaling network, probably by mediating phosphorylation of PPME1: following increases in intracellular sodium, SIK1 is activated by CaMK1 and phosphorylates PPME1 subunit of protein phosphatase 2A (PP2A), leading to dephosphorylation of sodium/potassium-transporting ATPase ATP1A1 and subsequent increase activity of ATP1A1. Acts as a regulator of muscle cells by phosphorylating and inhibiting class II histone deacetylases HDAC4 and HDAC5, leading to promote expression of MEF2 target genes in myocytes. Also required during cardiomyogenesis by regulating the exit of cardiomyoblasts from the cell cycle via down-regulation of CDKN1C/p57Kip2. Acts as a regulator of hepatic gluconeogenesis by phosphorylating and repressing the CREB-specific coactivators CRTC1/TORC1 and CRTC2/TORC2, leading to inhibit CREB activity. Also regulates hepatic lipogenesis by phosphorylating and inhibiting SREBF1. In concert with CRTC1/TORC1, regulates the light-induced entrainment of the circadian clock by attenuating PER1 induction; represses CREB-mediated transcription of PER1 by phosphorylating and deactivating CRTC1/TORC1. The chain is Serine/threonine-protein kinase SIK1 (SIK1) from Homo sapiens (Human).